Reading from the N-terminus, the 122-residue chain is Large ribosomal subunit protein bL12 (122 aa).

The protein belongs to the bacterial ribosomal protein bL12 family. Homodimer. Part of the ribosomal stalk of the 50S ribosomal subunit. Forms a multimeric L10(L12)X complex, where L10 forms an elongated spine to which 2 to 4 L12 dimers bind in a sequential fashion. Binds GTP-bound translation factors.

Forms part of the ribosomal stalk which helps the ribosome interact with GTP-bound translation factors. Is thus essential for accurate translation. In Shewanella putrefaciens (strain CN-32 / ATCC BAA-453), this protein is Large ribosomal subunit protein bL12.